Consider the following 551-residue polypeptide: Arginine--tRNA ligase (551 aa).

Positions 123-133 match the 'HIGH' region motif; it reads ANPTGPLTIGR.

Belongs to the class-I aminoacyl-tRNA synthetase family. As to quaternary structure, monomer.

Its subcellular location is the cytoplasm. It carries out the reaction tRNA(Arg) + L-arginine + ATP = L-arginyl-tRNA(Arg) + AMP + diphosphate. The polypeptide is Arginine--tRNA ligase (Chlorobaculum tepidum (strain ATCC 49652 / DSM 12025 / NBRC 103806 / TLS) (Chlorobium tepidum)).